The chain runs to 261 residues: 3-methyl-2-oxobutanoate hydroxymethyltransferase (261 aa).

Residues Asp42 and Asp81 each coordinate Mg(2+). 3-methyl-2-oxobutanoate-binding positions include 42–43 (DS), Asp81, and Lys110. Glu112 serves as a coordination point for Mg(2+). The active-site Proton acceptor is the Glu179.

Belongs to the PanB family. As to quaternary structure, homodecamer; pentamer of dimers. It depends on Mg(2+) as a cofactor.

It is found in the cytoplasm. The catalysed reaction is 3-methyl-2-oxobutanoate + (6R)-5,10-methylene-5,6,7,8-tetrahydrofolate + H2O = 2-dehydropantoate + (6S)-5,6,7,8-tetrahydrofolate. It participates in cofactor biosynthesis; coenzyme A biosynthesis. Its function is as follows. Catalyzes the reversible reaction in which hydroxymethyl group from 5,10-methylenetetrahydrofolate is transferred onto alpha-ketoisovalerate to form ketopantoate. This is 3-methyl-2-oxobutanoate hydroxymethyltransferase from Pyrobaculum neutrophilum (strain DSM 2338 / JCM 9278 / NBRC 100436 / V24Sta) (Thermoproteus neutrophilus).